Reading from the N-terminus, the 204-residue chain is Somatotropin (204 aa).

The first 17 residues, 1 to 17 (MDRVILLLSVVSLGVSS), serve as a signal peptide directing secretion. Residue Gln-18 is modified to Pyrrolidone carboxylic acid. His-36 contacts Zn(2+). The cysteines at positions 69 and 177 are disulfide-linked. Glu-186 lines the Zn(2+) pocket. Residues Cys-194 and Cys-202 are joined by a disulfide bond.

It belongs to the somatotropin/prolactin family.

The protein localises to the secreted. Growth hormone plays an important role in growth control and is involved in the regulation of several anabolic processes. Implicated as an osmoregulatory substance important for seawater adaptation. This is Somatotropin (gh) from Sebastes schlegelii (Korean rockfish).